A 561-amino-acid chain; its full sequence is Type II methyltransferase M.BstVI (561 aa).

The protein belongs to the N(4)/N(6)-methyltransferase family.

It catalyses the reaction a 2'-deoxyadenosine in DNA + S-adenosyl-L-methionine = an N(6)-methyl-2'-deoxyadenosine in DNA + S-adenosyl-L-homocysteine + H(+). Functionally, a gamma subtype methylase, recognizes the double-stranded sequence 5'-CTCGAG-3', methylates A-5 on both strands, and protects the DNA from cleavage by the BstVI endonuclease. The polypeptide is Type II methyltransferase M.BstVI (Geobacillus stearothermophilus (Bacillus stearothermophilus)).